The sequence spans 109 residues: Protein FAM32A-like (109 aa).

The tract at residues 1–48 is disordered; it reads MSEYKSVQKGSLKLKGVSLPSKKKKKKNKEMKRLEEQVLTSENEEGTK. Over residues 9–20 the composition is skewed to low complexity; the sequence is KGSLKLKGVSLP. Basic residues predominate over residues 21–30; sequence SKKKKKKNKE.

The protein belongs to the FAM32 family.

The protein resides in the nucleus. Its function is as follows. May induce G2 arrest and apoptosis. May also increase cell sensitivity to apoptotic stimuli. The protein is Protein FAM32A-like (fam32al) of Danio rerio (Zebrafish).